The chain runs to 290 residues: PIH1 domain-containing protein 1 (290 aa).

Phosphoserine occurs at positions 12, 16, and 173.

The protein belongs to the PIH1 family. In terms of assembly, component of the R2TP complex composed at least of RUVBL1, RUVBL2, RPAP3 and PIHD1. Component of the PAQosome complex which is responsible for the biogenesis of several protein complexes and which consists of R2TP complex members RUVBL1, RUVBL2, RPAP3 and PIH1D1, URI complex members PFDN2, PFDN6, PDRG1, UXT and URI1 as well as ASDURF, POLR2E and DNAAF10/WDR92. Interacts with phosphorylated TELO2. Mediates interaction of TELO2 with the R2TP complex. Interacts with phosphorylated ECD, EFTUD2/SNRP116, RPB1 and UBR5 and with RPB1 in a phosphorylation-independent manner. Interacts with the core C/D box snoRNP particle components NOP58 and FBL and with RUVBL1/TIP49. Interacts with RPAP3 and DNAAF10. Interacts with histone H4 and with SWI/SNF complex member SMARCB1/SNF5. Interacts with the mTORC1 complex member RPTOR. Interacts with isoform 1 of MSL1.

The protein resides in the nucleus. Functionally, involved in the assembly of C/D box small nucleolar ribonucleoprotein (snoRNP) particles. Recruits the SWI/SNF complex to the core promoter of rRNA genes and enhances pre-rRNA transcription. Mediates interaction of TELO2 with the R2TP complex which is necessary for the stability of MTOR and SMG1. Positively regulates the assembly and activity of the mTORC1 complex. The sequence is that of PIH1 domain-containing protein 1 (Pih1d1) from Mus musculus (Mouse).